A 24-amino-acid chain; its full sequence is Unknown protein 3 (24 aa).

This chain is Unknown protein 3, found in Pseudotsuga menziesii (Douglas-fir).